The following is an 88-amino-acid chain: Small ribosomal subunit protein uS15 (88 aa).

The protein belongs to the universal ribosomal protein uS15 family. In terms of assembly, part of the 30S ribosomal subunit. Forms a bridge to the 50S subunit in the 70S ribosome, contacting the 23S rRNA.

In terms of biological role, one of the primary rRNA binding proteins, it binds directly to 16S rRNA where it helps nucleate assembly of the platform of the 30S subunit by binding and bridging several RNA helices of the 16S rRNA. Functionally, forms an intersubunit bridge (bridge B4) with the 23S rRNA of the 50S subunit in the ribosome. This Leptospira biflexa serovar Patoc (strain Patoc 1 / Ames) protein is Small ribosomal subunit protein uS15.